The following is a 209-amino-acid chain: NADH-quinone oxidoreductase subunit C (209 aa).

Belongs to the complex I 30 kDa subunit family. As to quaternary structure, NDH-1 is composed of 14 different subunits. Subunits NuoB, C, D, E, F, and G constitute the peripheral sector of the complex.

The protein localises to the cell inner membrane. The catalysed reaction is a quinone + NADH + 5 H(+)(in) = a quinol + NAD(+) + 4 H(+)(out). Functionally, NDH-1 shuttles electrons from NADH, via FMN and iron-sulfur (Fe-S) centers, to quinones in the respiratory chain. The immediate electron acceptor for the enzyme in this species is believed to be ubiquinone. Couples the redox reaction to proton translocation (for every two electrons transferred, four hydrogen ions are translocated across the cytoplasmic membrane), and thus conserves the redox energy in a proton gradient. This chain is NADH-quinone oxidoreductase subunit C, found in Bordetella petrii (strain ATCC BAA-461 / DSM 12804 / CCUG 43448).